The primary structure comprises 348 residues: GTPase Obg (348 aa).

The Obg domain maps to 1-160; that stretch reads MHFLDQAKIF…MWVWLRLKLL (160 aa). The interval 120–145 is disordered; it reads RGGDGGRGNASYKTSTNRAPRQHGPG. Residues 161–328 enclose the OBG-type G domain; sequence ADAGLVGLPN…VLDKLLEAIG (168 aa). Residues 167–174, 192–196, 213–216, 280–283, and 309–311 contribute to the GTP site; these read GLPNAGKS, FTTLR, DIPG, NKID, and SGA. The Mg(2+) site is built by Ser-174 and Thr-194. A disordered region spans residues 326 to 348; that stretch reads AIGQPEPGPDADEEEKGGDWSPI.

Belongs to the TRAFAC class OBG-HflX-like GTPase superfamily. OBG GTPase family. In terms of assembly, monomer. Requires Mg(2+) as cofactor.

Its subcellular location is the cytoplasm. Its function is as follows. An essential GTPase which binds GTP, GDP and possibly (p)ppGpp with moderate affinity, with high nucleotide exchange rates and a fairly low GTP hydrolysis rate. Plays a role in control of the cell cycle, stress response, ribosome biogenesis and in those bacteria that undergo differentiation, in morphogenesis control. This chain is GTPase Obg, found in Sphingopyxis alaskensis (strain DSM 13593 / LMG 18877 / RB2256) (Sphingomonas alaskensis).